Reading from the N-terminus, the 210-residue chain is MAPTVERKNINLAPLKAAGVPIFFIVGGPGSGKGTQCDKIVAKYGLTHLSSGDLLRDEVKSGSPRGAQLTAIMESGALVPLEVVLDLVKEAMLKAIEKGSKGFLIDGYPREVAQGQQFESEIQEAKLVLFFDVAEETLVKRLLHRAQTSGRADDNADTIKKRLHTFVTSTAPVVDYYESKGKLVRINAEGSVDDIFAVVVANLDKATSKL.

30–35 (GSGKGT) is an ATP binding site. The interval 50-79 (SSGDLLRDEVKSGSPRGAQLTAIMESGALV) is NMP. AMP-binding positions include serine 51, arginine 56, 77-79 (ALV), 107-110 (GYPR), and glutamine 114. Positions 144–154 (HRAQTSGRADD) are LID. Arginine 145 serves as a coordination point for ATP. Arginine 151 and arginine 162 together coordinate AMP. Glycine 190 is a binding site for ATP.

It belongs to the adenylate kinase family. AK1 subfamily. Monomer.

The protein localises to the cytoplasm. It carries out the reaction AMP + ATP = 2 ADP. In terms of biological role, catalyzes the reversible transfer of the terminal phosphate group between ATP and AMP. Plays an important role in cellular energy homeostasis and in adenine nucleotide metabolism. In Caenorhabditis elegans, this protein is Adenylate kinase isoenzyme 1.